Here is a 197-residue protein sequence, read N- to C-terminus: SLDGAHAPWCDAEHRDIVNLKKSEFWNKGGPAWQKIVVCLVFDGIDPCDKNTLDLLATVGIYQDGVMKKDVDGKDTVVHIFEYTTQLSVTPNQQLIRPNDNDSTSLPPVQMIFCLKQKNSKKINSHRWLFNGFGRILNPEVCILLDAGTKPGPKSLMALWEAFYNDKDLGGACGEIHAMLGRGGVFGRKLLNPLVAA.

Belongs to the chitin synthase family. Class III subfamily.

The protein resides in the cell membrane. It carries out the reaction [(1-&gt;4)-N-acetyl-beta-D-glucosaminyl](n) + UDP-N-acetyl-alpha-D-glucosamine = [(1-&gt;4)-N-acetyl-beta-D-glucosaminyl](n+1) + UDP + H(+). In terms of biological role, polymerizes chitin, a structural polymer of the cell wall and septum, by transferring the sugar moiety of UDP-GlcNAc to the non-reducing end of the growing chitin polymer. The protein is Chitin synthase 3 (CHS3) of Exophiala jeanselmei (Dematiaceous fungus).